We begin with the raw amino-acid sequence, 309 residues long: Oxygen-dependent coproporphyrinogen-III oxidase (309 aa).

Position 94 (Ser94) interacts with substrate. A divalent metal cation contacts are provided by His98 and His108. His108 acts as the Proton donor in catalysis. Substrate is bound at residue 110–112 (NVR). 2 residues coordinate a divalent metal cation: His147 and His177. Residues 242 to 277 (YVEFNLVWDRGTLFGLQTGGRTESILMSLPPLVRWE) form an important for dimerization region. 260–262 (GGR) contacts substrate.

This sequence belongs to the aerobic coproporphyrinogen-III oxidase family. As to quaternary structure, homodimer. It depends on a divalent metal cation as a cofactor.

The protein localises to the cytoplasm. It carries out the reaction coproporphyrinogen III + O2 + 2 H(+) = protoporphyrinogen IX + 2 CO2 + 2 H2O. Its pathway is porphyrin-containing compound metabolism; protoporphyrin-IX biosynthesis; protoporphyrinogen-IX from coproporphyrinogen-III (O2 route): step 1/1. Its function is as follows. Involved in the heme biosynthesis. Catalyzes the aerobic oxidative decarboxylation of propionate groups of rings A and B of coproporphyrinogen-III to yield the vinyl groups in protoporphyrinogen-IX. The polypeptide is Oxygen-dependent coproporphyrinogen-III oxidase (Yersinia pseudotuberculosis serotype O:1b (strain IP 31758)).